Consider the following 50-residue polypeptide: MLTKYALAAVIVLCLTVLGFTLLVGDSLCEFTVKERNIEFKAVLAYEPKK.

Residues 5-25 (YALAAVIVLCLTVLGFTLLVG) form a helical membrane-spanning segment.

The protein belongs to the Hok/Gef family.

The protein localises to the cell inner membrane. In terms of biological role, toxic component of a type I toxin-antitoxin (TA) system; if it expressed it could be neutralized by antisense antitoxin RNA SokE. This is Toxic protein HokE from Escherichia coli (strain K12).